Consider the following 61-residue polypeptide: Myrmicitoxin(1)-Pm5a (61 aa).

Positions 1–23 (MKAIIFLFAVLTVVAIIIPIISG) are cleaved as a signal peptide. Residues 24–33 (EPNAGPLAAS) constitute a propeptide that is removed on maturation. Residue Gln-60 is modified to Glutamine amide.

The protein belongs to the formicidae venom clade 2 family. As to expression, expressed by the venom gland.

Its subcellular location is the secreted. Toxin that causes a rapid and irreversible paralysis when intrathoracically injected into insects (blowflies). Does not cause spontaneous nocifensive behaviors by intraplantar injection in mice. The protein is Myrmicitoxin(1)-Pm5a of Pogonomyrmex maricopa (Maricopa harvester ant).